We begin with the raw amino-acid sequence, 668 residues long: Exoribonuclease 2 (668 aa).

An RNB domain is found at 193–521; sequence RIEMTHVPFV…INHRMLKAVI (329 aa). The S1 motif domain occupies 568 to 650; that stretch reads QTCFTGEIFD…ENRSLVAKPT (83 aa).

This sequence belongs to the RNR ribonuclease family. RNase II subfamily.

Its subcellular location is the cytoplasm. It carries out the reaction Exonucleolytic cleavage in the 3'- to 5'-direction to yield nucleoside 5'-phosphates.. In terms of biological role, involved in mRNA degradation. Hydrolyzes single-stranded polyribonucleotides processively in the 3' to 5' direction. In Vibrio parahaemolyticus serotype O3:K6 (strain RIMD 2210633), this protein is Exoribonuclease 2.